The chain runs to 167 residues: Mediator of RNA polymerase II transcription subunit 10 (167 aa).

The span at 141 to 158 shows a compositional bias: gly residues; that stretch reads TGGRTVGGEGEGAGQGEG. Positions 141 to 167 are disordered; sequence TGGRTVGGEGEGAGQGEGGEGRGEGGN.

It belongs to the Mediator complex subunit 10 family. As to quaternary structure, component of the Mediator complex.

It localises to the nucleus. Component of the Mediator complex, a coactivator involved in the regulated transcription of nearly all RNA polymerase II-dependent genes. Mediator functions as a bridge to convey information from gene-specific regulatory proteins to the basal RNA polymerase II transcription machinery. Mediator is recruited to promoters by direct interactions with regulatory proteins and serves as a scaffold for the assembly of a functional preinitiation complex with RNA polymerase II and the general transcription factors. The protein is Mediator of RNA polymerase II transcription subunit 10 (NUT2) of Chaetomium globosum (strain ATCC 6205 / CBS 148.51 / DSM 1962 / NBRC 6347 / NRRL 1970) (Soil fungus).